Here is a 731-residue protein sequence, read N- to C-terminus: Inducible ornithine decarboxylase (731 aa).

K356 bears the N6-(pyridoxal phosphate)lysine mark.

It belongs to the Orn/Lys/Arg decarboxylase class-I family. In terms of assembly, dodecamer. It depends on pyridoxal 5'-phosphate as a cofactor.

The catalysed reaction is L-ornithine + H(+) = putrescine + CO2. This chain is Inducible ornithine decarboxylase (odcI), found in Lactobacillus sp. (strain 30a).